The primary structure comprises 207 residues: Large ribosomal subunit protein bL25 (207 aa).

Residues 1 to 20 (MANHQIKAQRRKDEGKGASR) are disordered.

This sequence belongs to the bacterial ribosomal protein bL25 family. CTC subfamily. In terms of assembly, part of the 50S ribosomal subunit; part of the 5S rRNA/L5/L18/L25 subcomplex. Contacts the 5S rRNA. Binds to the 5S rRNA independently of L5 and L18.

In terms of biological role, this is one of the proteins that binds to the 5S RNA in the ribosome where it forms part of the central protuberance. The polypeptide is Large ribosomal subunit protein bL25 (Xylella fastidiosa (strain M23)).